A 237-amino-acid chain; its full sequence is Large ribosomal subunit protein uL1 (237 aa).

This sequence belongs to the universal ribosomal protein uL1 family. As to quaternary structure, part of the 50S ribosomal subunit.

Functionally, binds directly to 23S rRNA. The L1 stalk is quite mobile in the ribosome, and is involved in E site tRNA release. Protein L1 is also a translational repressor protein, it controls the translation of the L11 operon by binding to its mRNA. The sequence is that of Large ribosomal subunit protein uL1 from Synechococcus sp. (strain ATCC 27144 / PCC 6301 / SAUG 1402/1) (Anacystis nidulans).